The following is a 1377-amino-acid chain: DNA-directed RNA polymerase subunit beta' (1377 aa).

Zn(2+)-binding residues include Cys-60, Cys-62, Cys-75, and Cys-78. 3 residues coordinate Mg(2+): Asp-449, Asp-451, and Asp-453. Zn(2+) contacts are provided by Cys-777, Cys-851, Cys-858, and Cys-861.

It belongs to the RNA polymerase beta' chain family. As to quaternary structure, the RNAP catalytic core consists of 2 alpha, 1 beta, 1 beta' and 1 omega subunit. When a sigma factor is associated with the core the holoenzyme is formed, which can initiate transcription. It depends on Mg(2+) as a cofactor. Zn(2+) serves as cofactor.

It catalyses the reaction RNA(n) + a ribonucleoside 5'-triphosphate = RNA(n+1) + diphosphate. In terms of biological role, DNA-dependent RNA polymerase catalyzes the transcription of DNA into RNA using the four ribonucleoside triphosphates as substrates. The sequence is that of DNA-directed RNA polymerase subunit beta' from Borrelia turicatae (strain 91E135).